Reading from the N-terminus, the 911-residue chain is General transcription factor 3C polypeptide 2 (911 aa).

Disordered regions lie at residues 24-187 (DSPG…RRRA) and 205-297 (ALPA…MAPN). Positions 35-46 (DVKTSSEMTSAE) are enriched in polar residues. Position 63 is a phosphoserine (S63). Positions 64 to 81 (PDQRRLPPEQESLSRLEQ) are enriched in basic and acidic residues. A compositionally biased stretch (basic residues) spans 92–112 (SKPRASKPGRKRGGRTRKGPK). Over residues 114–123 (PQQPNPPSAP) the composition is skewed to pro residues. A phosphoserine mark is found at S132, S165, S167, S220, and S260. Residues 253-262 (EAEDVEESEG) are compositionally biased toward acidic residues. Residues 263-277 (PSESSSEPEPVVPRS) are compositionally biased toward low complexity. 6 WD repeats span residues 366 to 426 (PEDG…MNET), 427 to 483 (HPLS…AWEL), 484 to 535 (PGTP…IYKV), 536 to 603 (QCVA…SLKL), 604 to 654 (YPFQ…NSIK), and 655 to 690 (RFLSTELAWLLPYNGVTVAQDNCYASYGLCGIHYID). S597 carries the post-translational modification Phosphoserine. The disordered stretch occupies residues 765–785 (SPEGPDHSSASSGVPNPPKAR). A phosphoserine mark is found at S871, S892, and S893. The tract at residues 889-911 (FQPSSPTRRPGFSPTSHRLLPTP) is disordered. T895 is modified (phosphothreonine). A Phosphoserine modification is found at S901.

In terms of assembly, part of the TFIIIC subcomplex TFIIIC2, consisting of six subunits, GTF3C1, GTF3C2, GTF3C3, GTF3C4, GTF3C5 and GTF3C6.

The protein localises to the nucleus. Functionally, required for RNA polymerase III-mediated transcription. Component of TFIIIC that initiates transcription complex assembly on tRNA and is required for transcription of 5S rRNA and other stable nuclear and cytoplasmic RNAs. May play a direct role in stabilizing interactions of TFIIIC2 with TFIIIC1. This is General transcription factor 3C polypeptide 2 (GTF3C2) from Homo sapiens (Human).